Reading from the N-terminus, the 389-residue chain is Leucine aminopeptidase 1 (389 aa).

The signal sequence occupies residues 1–18 (MKSSVLLSLCTAALVAGA). Positions 19 to 89 (AHPLEPQVVL…INANRLIEKS (71 aa)) are excised as a propeptide. N-linked (GlcNAc...) asparagine glycans are attached at residues Asn99, Asn156, and Asn180. Zn(2+)-binding residues include His188, Asp207, Glu246, and Asp273. Cys322 and Cys326 are oxidised to a cystine. His355 contacts Zn(2+).

This sequence belongs to the peptidase M28 family. M28E subfamily. Monomer. The cofactor is Zn(2+).

The protein localises to the secreted. Its function is as follows. Extracellular aminopeptidase that allows assimilation of proteinaceous substrates. The sequence is that of Leucine aminopeptidase 1 (LAP1) from Phaeosphaeria nodorum (strain SN15 / ATCC MYA-4574 / FGSC 10173) (Glume blotch fungus).